The following is a 156-amino-acid chain: Small ribosomal subunit protein uS7 (156 aa).

The protein belongs to the universal ribosomal protein uS7 family. Part of the 30S ribosomal subunit. Contacts proteins S9 and S11.

In terms of biological role, one of the primary rRNA binding proteins, it binds directly to 16S rRNA where it nucleates assembly of the head domain of the 30S subunit. Is located at the subunit interface close to the decoding center, probably blocks exit of the E-site tRNA. The polypeptide is Small ribosomal subunit protein uS7 (Pelotomaculum thermopropionicum (strain DSM 13744 / JCM 10971 / SI)).